The chain runs to 1710 residues: Ankyrin repeat domain-containing protein 26 (1710 aa).

Residues 1–41 (MKKIFSKKGESPLGSFARRQRSSAGGGGEPGEGAYSQPGYH) are disordered. Phosphoserine is present on residues serine 11 and serine 15. ANK repeat units follow at residues 45–75 (RDLGKIHKAASAGNVAKVQQILLLRKNGLND), 79–108 (MNRTALHLACANGHPEVVTLLVDRKCQLNV), 112–141 (ENRTALMKAVQCQEEKCATILLEHGADPNL), 145–174 (HGNTALHYAVYNEDISVATKLLLYDANIEA), and 178–207 (DDLTPLLLAVSGKKQQMVEFLIKKKANVNA). The interval 222 to 274 (KEERIPKHSSQNSNSVDESSEDSLSRLSGKPGVDDSWPTSDDEDLNFDTKNVP) is disordered. Residues serine 241, serine 261, serine 489, and serine 530 each carry the phosphoserine modification. Positions 504-630 (DSVPNKAGGM…EKRTSKESVN (127 aa)) are disordered. Positions 529–566 (ASEEEQEREGSENNQPQVEEERKKHRNNEMEVSANIHD) form a coiled coil. The span at 569 to 580 (TDDAEDDDDDDG) shows a compositional bias: acidic residues. 2 stretches are compositionally biased toward basic and acidic residues: residues 586–602 (KSGETDHQQFPRKENKE) and 613–626 (KEVKSTEKEKRTSK). Serine 631 is subject to Phosphoserine. The span at 650-660 (DSSLSEIDEDE) shows a compositional bias: acidic residues. Residues 650-698 (DSSLSEIDEDEGRPTKKTSNEKNKVKNQIQSMDDVDDLTQSSETASEDC) form a disordered region. Positions 661 to 673 (GRPTKKTSNEKNK) are enriched in basic and acidic residues. 4 coiled-coil regions span residues 743–873 (KNHC…NARM), 905–1472 (EEEK…MVEL), 1517–1587 (NNFA…NTKL), and 1649–1674 (LSKMQQELEKNITRELKEAAAELESG). Residues 892 to 912 (AQKKMNSENSHSHEEEKDLSH) form a disordered region.

In terms of assembly, interacts with TRIO. Interacts with GPS2. Interacts with CCDC85B. Interacts with HMMR.

Functionally, acts as a regulator of adipogenesis. Involved in the regulation of the feeding behavior. The chain is Ankyrin repeat domain-containing protein 26 from Homo sapiens (Human).